A 500-amino-acid chain; its full sequence is Protein farnesyltransferase subunit beta (500 aa).

Residues 117-140 form a disordered region; that stretch reads LQNDDNNGNNNNRENNQNGGGFGG. Low complexity predominate over residues 119–133; sequence NDDNNGNNNNRENNQ. 5 PFTB repeats span residues 121–162, 172–213, 220–261, 268–309, and 343–384; these read DNNG…YVIG, REAM…SMLN, ERGV…SILN, MNSL…IIIQ, and QEYV…SLSQ. Residues 246–249 and 288–291 each bind (2E,6E)-farnesyl diphosphate; these read HGGY and RTNK. Residues D294 and C296 each coordinate Zn(2+). 297–300 provides a ligand contact to (2E,6E)-farnesyl diphosphate; the sequence is YSYW. H372 is a Zn(2+) binding site. The tract at residues 402-451 is disordered; sequence FEQPSPPINKKSTNVFTISNNNNNNNNKNNNSDDNNNNSNNNNNNSENQL. Positions 420–449 are enriched in low complexity; that stretch reads SNNNNNNNNKNNNSDDNNNNSNNNNNNSEN.

The protein belongs to the protein prenyltransferase subunit beta family. Heterodimer of fntA and fntB (farnesyltransferase). Heterodimer of an alpha and a beta subunit. The cofactor is Zn(2+).

It carries out the reaction L-cysteinyl-[protein] + (2E,6E)-farnesyl diphosphate = S-(2E,6E)-farnesyl-L-cysteinyl-[protein] + diphosphate. Its function is as follows. Catalyzes the transfer of a farnesyl moiety from farnesyl diphosphate to a cysteine at the fourth position from the C-terminus of several proteins. The beta subunit is responsible for peptide-binding. The protein is Protein farnesyltransferase subunit beta (fntB) of Dictyostelium discoideum (Social amoeba).